The primary structure comprises 4912 residues: Probable E3 ubiquitin-protein ligase HERC2 (4912 aa).

The interval 1–67 (MFNRQASGGA…GSGSAAPPSH (67 aa)) is disordered. The span at 8-17 (GGAGSSGQGA) shows a compositional bias: gly residues. Positions 18–31 (GSSQTASAAPVSAG) are enriched in low complexity. 2 stretches are compositionally biased toward gly residues: residues 32-41 (VGVGGGGGAS) and 49-59 (SAAGSGSGSGS). 5 RCC1 repeats span residues 634-685 (NHNA…AITC), 686-739 (GGNL…ALTS), 741-789 (GLVF…ALSS), 791-843 (GQLY…ALSS), and 844-897 (SGEV…VWTQ). Disordered regions lie at residues 1102–1129 (RLSP…STSP), 1428–1475 (QLLQ…PGRG), and 1659–1681 (QEQE…EEET). The span at 1446–1458 (SHSCHSTAGNTPT) shows a compositional bias: polar residues. T1776 is modified (phosphothreonine). The region spanning 1917 to 1990 (SGPDLAKLMK…QYDLQLADSA (74 aa)) is the MIB/HERC2 domain. Disordered stretches follow at residues 1994–2018 (ASPT…SHPS) and 2381–2412 (GSIY…SGSG). Polar residues predominate over residues 2396–2412 (ESQQPGEQDQQLSSGSG). Residues 2511-2557 (ATDAQLIGQIMEMGFTRRTVELALKQLSLQAEIMPTPEQIVQWILEH) enclose the UBA domain. A disordered region spans residues 2572-2620 (LASSASSHDPEADSDNECPSSNSTTSSSTSSDTVEGQPMAVSGPAPPVK). Residues 2591 to 2604 (SSNSTTSSSTSSDT) are compositionally biased toward low complexity. Residues 2624–2699 (RKDFQTADLY…VCFVHIELVE (76 aa)) enclose the CPH domain. The region spanning 2780-2958 (TSATLPSLGD…FLASEYSAGV (179 aa)) is the DOC domain. RCC1 repeat units follow at residues 2985–3036 (PCTV…IVSQ), 3037–3090 (DGKV…ALTL), 3091–3142 (DGKV…AISS), 3144–3194 (GELY…TLAL), 3197–3248 (DGAV…ALTR), 3250–3300 (GEVW…AVTD), and 3302–3352 (GQVY…AWGL). 2 disordered regions span residues 3352–3374 (LPNA…RDPL) and 3953–4000 (LPSS…EQPD). Residues 3974–3988 (LNSTTSLSSSTVSNV) are compositionally biased toward low complexity. RCC1 repeat units follow at residues 4049–4099 (STIY…AVTP), 4101–4153 (GKLF…ALTT), 4155–4205 (GEVY…AITA), 4207–4259 (GHVL…CITD), 4261–4311 (DNVW…ALTK), 4313–4363 (GAVY…ACSD), and 4365–4415 (GEVY…ALST). The region spanning 4547 to 4882 (ALALPHRVWK…IHFCKSIDTD (336 aa)) is the HECT domain. C4850 functions as the Glycyl thioester intermediate in the catalytic mechanism. A disordered region spans residues 4891–4912 (EPTEATGSEDNSDLESVASHEG).

Its subcellular location is the cytoplasm. It localises to the cytoskeleton. The protein resides in the microtubule organizing center. It is found in the centrosome. The protein localises to the centriole. It carries out the reaction S-ubiquitinyl-[E2 ubiquitin-conjugating enzyme]-L-cysteine + [acceptor protein]-L-lysine = [E2 ubiquitin-conjugating enzyme]-L-cysteine + N(6)-ubiquitinyl-[acceptor protein]-L-lysine.. It functions in the pathway protein modification; protein ubiquitination. Probable E3 ubiquitin-protein ligase which accepts ubiquitin from an E2 ubiquitin-conjugating enzyme in the form of a thioester and then directly transfers the ubiquitin to targeted substrates. The chain is Probable E3 ubiquitin-protein ligase HERC2 (HERC2) from Drosophila melanogaster (Fruit fly).